A 421-amino-acid chain; its full sequence is Ubiquitin-like modifier-activating enzyme 5 (421 aa).

5 residues coordinate ATP: G89, D110, K133, N156, and N191. Positions 233 and 236 each coordinate Zn(2+). C257 (glycyl thioester intermediate) is an active-site residue. The Zn(2+) site is built by C310 and C315.

Belongs to the ubiquitin-activating E1 family. UBA5 subfamily.

Functionally, E1-like enzyme which activates UFM1. In Oryza sativa subsp. japonica (Rice), this protein is Ubiquitin-like modifier-activating enzyme 5.